Here is a 195-residue protein sequence, read N- to C-terminus: MARCKS-related protein (195 aa).

The disordered stretch occupies residues 1–195 (MGSQSSKAPR…PTPASAEQNE (195 aa)). Gly2 carries the N-myristoyl glycine lipid modification. Phosphothreonine is present on Thr14. Over residues 16–26 (EEAAGASPAKA) the composition is skewed to low complexity. Residues Ser22, Ser36, Ser41, and Ser48 each carry the phosphoserine modification. Over residues 53–64 (GTDEAAGATGDA) the composition is skewed to low complexity. Ser71 carries the phosphoserine modification. Residues 76–85 (AKGEVPPKET) are compositionally biased toward basic and acidic residues. A Phosphothreonine modification is found at Thr85. The span at 86-98 (PKKKKKFSFKKPF) shows a compositional bias: basic residues. The tract at residues 87-110 (KKKKKFSFKKPFKLSGLSFKRNRK) is effector domain involved in lipid-binding and calmodulin-binding. Ser93, Ser101, Ser104, Ser119, Ser120, and Ser135 each carry phosphoserine. At Thr148 the chain carries Phosphothreonine. Residues Ser151, Ser162, and Ser165 each carry the phosphoserine modification. Low complexity predominate over residues 153 to 195 (EPQAKGAEASAASEEEAGPQATEPSTPSGPESGPTPASAEQNE). Residues Thr178 and Thr187 each carry the phosphothreonine modification.

This sequence belongs to the MARCKS family. As to quaternary structure, binds to filamentous actin (F-actin), but not to monomeric G-actin, independently of its phosphorylation status. In terms of processing, phosphorylated. Phosphorylation at Ser-120 and Thr-178 is non-redundantly catalyzed by MAPK8 in vivo. Phosphorylation at Thr-148 is preferentially catalyzed by MAPK8 in vivo, but this modification can also be catalyzed by other kinases in the absence of MAPK8. May be phosphorylated by protein kinase C, which disrupts the interaction with calmodulin.

It is found in the cytoplasm. The protein resides in the cytoskeleton. Its subcellular location is the cell membrane. Controls cell movement by regulating actin cytoskeleton homeostasis and filopodium and lamellipodium formation. When unphosphorylated, induces cell migration. When phosphorylated by MAPK8, induces actin bundles formation and stabilization, thereby reducing actin plasticity, hence restricting cell movement, including neuronal migration. May be involved in coupling the protein kinase C and calmodulin signal transduction systems. The chain is MARCKS-related protein (MARCKSL1) from Homo sapiens (Human).